Here is a 368-residue protein sequence, read N- to C-terminus: Phosphoserine aminotransferase (368 aa).

Arg-42 is a binding site for L-glutamate. Residues 76 to 77, Trp-102, Thr-152, Asp-179, and Gln-202 contribute to the pyridoxal 5'-phosphate site; that span reads AS. Lys-203 carries the N6-(pyridoxal phosphate)lysine modification. 245–246 contributes to the pyridoxal 5'-phosphate binding site; sequence NT.

It belongs to the class-V pyridoxal-phosphate-dependent aminotransferase family. SerC subfamily. As to quaternary structure, homodimer. Requires pyridoxal 5'-phosphate as cofactor.

The protein resides in the cytoplasm. The catalysed reaction is O-phospho-L-serine + 2-oxoglutarate = 3-phosphooxypyruvate + L-glutamate. The enzyme catalyses 4-(phosphooxy)-L-threonine + 2-oxoglutarate = (R)-3-hydroxy-2-oxo-4-phosphooxybutanoate + L-glutamate. It functions in the pathway amino-acid biosynthesis; L-serine biosynthesis; L-serine from 3-phospho-D-glycerate: step 2/3. It participates in cofactor biosynthesis; pyridoxine 5'-phosphate biosynthesis; pyridoxine 5'-phosphate from D-erythrose 4-phosphate: step 3/5. Catalyzes the reversible conversion of 3-phosphohydroxypyruvate to phosphoserine and of 3-hydroxy-2-oxo-4-phosphonooxybutanoate to phosphohydroxythreonine. This chain is Phosphoserine aminotransferase, found in Nitrosomonas europaea (strain ATCC 19718 / CIP 103999 / KCTC 2705 / NBRC 14298).